The following is a 405-amino-acid chain: Amino acid transporter AVT1I (405 aa).

Transmembrane regions (helical) follow at residues 22–42, 46–66, 93–113, 140–160, 169–189, 201–221, 234–254, 278–298, 318–338, 343–363, and 377–397; these read CFNA…YSLA, WLSL…SLLI, IIVS…FLIL, FMAT…LSVL, LATT…GIGF, IPTA…LPTL, VLLI…VLGY, VAIY…ITPT, LLIS…LPFF, SLVG…LCYL, and IMLF…TYIA.

The protein belongs to the amino acid/polyamine transporter 2 family. Amino acid/auxin permease (AAAP) (TC 2.A.18.5) subfamily.

It is found in the membrane. In Arabidopsis thaliana (Mouse-ear cress), this protein is Amino acid transporter AVT1I.